Consider the following 297-residue polypeptide: Undecaprenyl-diphosphatase 3 (297 aa).

Helical transmembrane passes span 39-59 (PGAAFTAVTQIGTETAVLIYF), 89-109 (WLVLLGTIPIGLLGVTLQDAI), 118-138 (LIATTLIVLGLILGGADWYAS), 203-223 (FLLAMPAVLASGVFELKSIGG), 237-257 (PTIVATVVAFATGYAAIAWFL), and 268-288 (FVLYRVALGLLLLALLAGGAI).

Belongs to the UppP family.

Its subcellular location is the cell membrane. It catalyses the reaction di-trans,octa-cis-undecaprenyl diphosphate + H2O = di-trans,octa-cis-undecaprenyl phosphate + phosphate + H(+). Its function is as follows. Catalyzes the dephosphorylation of undecaprenyl diphosphate (UPP). Confers resistance to bacitracin. In Frankia alni (strain DSM 45986 / CECT 9034 / ACN14a), this protein is Undecaprenyl-diphosphatase 3.